Consider the following 806-residue polypeptide: Mitogen-activated protein kinase 7 (806 aa).

Residues 1–23 are disordered; that stretch reads MAEPLKEEDGEDGSGEPPGRVKA. A2 carries the post-translational modification N-acetylalanine. The required for cytoplasmic targeting stretch occupies residues 2 to 77; sequence AEPLKEEDGE…VVSSARRRLT (76 aa). A Protein kinase domain is found at 55-347; the sequence is YEIIETIGNG…AAAALRHPFL (293 aa). Residues 61-69 and K84 each bind ATP; that span reads IGNGAYGVV. Residues 78 to 139 are required for binding to MAP2K5; sequence GQQVAIKKIP…FRSVYVVLDL (62 aa). The segment at 140–406 is necessary for oligomerization; that stretch reads MESDLHQIIH…QQIRFQPSLQ (267 aa). D182 (proton acceptor) is an active-site residue. Residues 219-221 carry the TXY motif; sequence TEY. The may not be required for kinase activity; required to stimulate MEF2C activity stretch occupies residues 407-806; the sequence is PVASEPVCPD…LSDLPDLQEP (400 aa). Disordered regions lie at residues 424–473 and 488–727; these read APSG…AISD and RSRL…PKGS. A compositionally biased stretch (pro residues) spans 433–443; that stretch reads SPPPALPPCSD. 3 stretches are compositionally biased toward basic and acidic residues: residues 502 to 519, 527 to 544, and 563 to 573; these read PEPRKPVTAQERQREREE, RAKEREKRRQERERKERG, and DNDRSLLERWT. The Nuclear localization signal motif lies at 505–539; it reads RKPVTAQERQREREEKRRRRQERAKEREKRRQERE. Over residues 578 to 592 the composition is skewed to pro residues; it reads PPAPAPAPAPAPAPA. A compositionally biased stretch (low complexity) spans 593–603; it reads PSSAQPTSTPT. Residues 627 to 643 show a composition bias toward pro residues; the sequence is VCPPPGPVPQPAGPIPA. The segment covering 647–660 has biased composition (polar residues); that stretch reads TAPSTSLLASQSLV. A compositionally biased stretch (pro residues) spans 678-689; that stretch reads PSGPPPPDPGLT. Over residues 693–710 the composition is skewed to polar residues; it reads STSESPDVNLVTQQLSKS. Phosphoserine is present on S710. T723 is subject to Phosphothreonine.

This sequence belongs to the protein kinase superfamily. CMGC Ser/Thr protein kinase family. MAP kinase subfamily. In terms of assembly, interacts with MAP2K5. Forms oligomers. Interacts with MEF2A, MEF2C and MEF2D; the interaction phosphorylates the MEF2s and enhances transcriptional activity of MEF2A, MEF2C but not MEF2D. Interacts with SGK1. Interacts with PML. Interacts (via N-terminal half) with HSP90AB1-CDC37 chaperone complex in resting cells; the interaction is MAP2K5-independent and prevents MAPK7 from ubiquitination and proteasomal degradation. Interacts with STUB1/CHIP; the interaction is enhanced in the presence of IGF1 or MAP2K5 and promotes STUB1/CHIP E3 ligase activity. The cofactor is Mg(2+). Dually phosphorylated on Thr-219 and Tyr-221, which activates the enzyme. In terms of tissue distribution, detected in testis, brain, kidney, lung and heart. Detected in total embryo (at protein level).

The protein localises to the cytoplasm. The protein resides in the nucleus. It localises to the PML body. The enzyme catalyses L-seryl-[protein] + ATP = O-phospho-L-seryl-[protein] + ADP + H(+). It carries out the reaction L-threonyl-[protein] + ATP = O-phospho-L-threonyl-[protein] + ADP + H(+). Its activity is regulated as follows. Activated by tyrosine and threonine phosphorylation. Activated in response to hyperosmolarity, hydrogen peroxide, and epidermal growth factor (EGF). In terms of biological role, plays a role in various cellular processes such as proliferation, differentiation and cell survival. The upstream activator of MAPK7 is the MAPK kinase MAP2K5. Upon activation, it translocates to the nucleus and phosphorylates various downstream targets including MEF2C. EGF activates MAPK7 through a Ras-independent and MAP2K5-dependent pathway. As part of the MAPK/ERK signaling pathway, acts as a negative regulator of apoptosis in cardiomyocytes via interaction with STUB1/CHIP and promotion of STUB1-mediated ubiquitination and degradation of ICER-type isoforms of CREM. May have a role in muscle cell differentiation. May be important for endothelial function and maintenance of blood vessel integrity. MAP2K5 and MAPK7 interact specifically with one another and not with MEK1/ERK1 or MEK2/ERK2 pathways. Phosphorylates SGK1 at Ser-78 and this is required for growth factor-induced cell cycle progression. Involved in the regulation of p53/TP53 by disrupting the PML-MDM2 interaction. The chain is Mitogen-activated protein kinase 7 (Mapk7) from Mus musculus (Mouse).